Consider the following 134-residue polypeptide: Small ribosomal subunit protein uS8c (134 aa).

Belongs to the universal ribosomal protein uS8 family. As to quaternary structure, part of the 30S ribosomal subunit.

It localises to the plastid. The protein localises to the chloroplast. Functionally, one of the primary rRNA binding proteins, it binds directly to 16S rRNA central domain where it helps coordinate assembly of the platform of the 30S subunit. In Arabis hirsuta (Hairy rock-cress), this protein is Small ribosomal subunit protein uS8c (rps8).